The chain runs to 783 residues: Tricorn protease-interacting factor F2 (783 aa).

Substrate is bound by residues E107 and 236-240 (GAMEN). H271 contributes to the Zn(2+) binding site. E272 serves as the catalytic Proton acceptor. Zn(2+) contacts are provided by H275 and E294.

It belongs to the peptidase M1 family. As to quaternary structure, monomer. Part of the Tricorn proteolytic complex. It depends on Zn(2+) as a cofactor.

The protein localises to the cytoplasm. Functionally, proteases F1, F2 and F3 degrade oligopeptides produced by Tricorn (themselves probably produced by the proteasome), yielding free amino acids. In Thermoplasma acidophilum (strain ATCC 25905 / DSM 1728 / JCM 9062 / NBRC 15155 / AMRC-C165), this protein is Tricorn protease-interacting factor F2 (trf2).